Consider the following 332-residue polypeptide: RNA polymerase II holoenzyme cyclin-like subunit (332 aa).

A Cyclin N-terminal domain is found at 74-175 (RIYCYFLIMK…LIEELQSYMI (102 aa)).

It belongs to the cyclin family. Cyclin C subfamily. As to quaternary structure, component of the SRB8-11 complex, a regulatory module of the Mediator complex.

Its subcellular location is the nucleus. In terms of biological role, component of the SRB8-11 complex. The SRB8-11 complex is a regulatory module of the Mediator complex which is itself involved in regulation of basal and activated RNA polymerase II-dependent transcription. The SRB8-11 complex may be involved in the transcriptional repression of a subset of genes regulated by Mediator. It may inhibit the association of the Mediator complex with RNA polymerase II to form the holoenzyme complex. The SRB8-11 complex phosphorylates the C-terminal domain (CTD) of the largest subunit of RNA polymerase II. In Eremothecium gossypii (strain ATCC 10895 / CBS 109.51 / FGSC 9923 / NRRL Y-1056) (Yeast), this protein is RNA polymerase II holoenzyme cyclin-like subunit (SSN8).